Reading from the N-terminus, the 80-residue chain is Large ribosomal subunit protein bL31B (80 aa).

Belongs to the bacterial ribosomal protein bL31 family. Type B subfamily. In terms of assembly, part of the 50S ribosomal subunit.

The sequence is that of Large ribosomal subunit protein bL31B from Exiguobacterium sp. (strain ATCC BAA-1283 / AT1b).